Consider the following 355-residue polypeptide: Methylthioribose-1-phosphate isomerase (355 aa).

Residues 50-52 (RGA), R93, and Q198 each bind substrate. The active-site Proton donor is the D239. 249 to 250 (NK) provides a ligand contact to substrate.

Belongs to the eIF-2B alpha/beta/delta subunits family. MtnA subfamily. Homodimer.

It catalyses the reaction 5-(methylsulfanyl)-alpha-D-ribose 1-phosphate = 5-(methylsulfanyl)-D-ribulose 1-phosphate. The protein operates within amino-acid biosynthesis; L-methionine biosynthesis via salvage pathway; L-methionine from S-methyl-5-thio-alpha-D-ribose 1-phosphate: step 1/6. Functionally, catalyzes the interconversion of methylthioribose-1-phosphate (MTR-1-P) into methylthioribulose-1-phosphate (MTRu-1-P). This Geobacillus thermodenitrificans (strain NG80-2) protein is Methylthioribose-1-phosphate isomerase.